Here is a 160-residue protein sequence, read N- to C-terminus: Transcription elongation factor GreA (160 aa).

A coiled-coil region spans residues 1–31; it reads MAEKTYPMTLEEKEKLEKELEELKLVRRPEI.

The protein belongs to the GreA/GreB family.

Necessary for efficient RNA polymerase transcription elongation past template-encoded arresting sites. The arresting sites in DNA have the property of trapping a certain fraction of elongating RNA polymerases that pass through, resulting in locked ternary complexes. Cleavage of the nascent transcript by cleavage factors such as GreA or GreB allows the resumption of elongation from the new 3'terminus. GreA releases sequences of 2 to 3 nucleotides. This Streptococcus suis (strain 98HAH33) protein is Transcription elongation factor GreA.